We begin with the raw amino-acid sequence, 333 residues long: Probable tRNA pseudouridine synthase B (333 aa).

Over residues 1-14 (MKCPSREVFSKFEE) the composition is skewed to basic and acidic residues. The disordered stretch occupies residues 1 to 27 (MKCPSREVFSKFEESTNPQWGKPPSQR). Asp71 serves as the catalytic Nucleophile. The PUA domain occupies 238 to 313 (LPKIWVRDSA…LVARTDRVVM (76 aa)).

This sequence belongs to the pseudouridine synthase TruB family. Type 2 subfamily.

The enzyme catalyses uridine(55) in tRNA = pseudouridine(55) in tRNA. Its function is as follows. Could be responsible for synthesis of pseudouridine from uracil-55 in the psi GC loop of transfer RNAs. The sequence is that of Probable tRNA pseudouridine synthase B from Pyrobaculum aerophilum (strain ATCC 51768 / DSM 7523 / JCM 9630 / CIP 104966 / NBRC 100827 / IM2).